The chain runs to 506 residues: AMP phosphorylase (506 aa).

Residues Gly-168, Ser-194–Gly-199, and Thr-203 each bind AMP. Catalysis depends on Asp-256, which acts as the Proton donor. AMP is bound by residues Ser-264 and Lys-288.

This sequence belongs to the thymidine/pyrimidine-nucleoside phosphorylase family. Type 2 subfamily.

It catalyses the reaction AMP + phosphate = alpha-D-ribose 1,5-bisphosphate + adenine. The enzyme catalyses CMP + phosphate = cytosine + alpha-D-ribose 1,5-bisphosphate. The catalysed reaction is UMP + phosphate = alpha-D-ribose 1,5-bisphosphate + uracil. Catalyzes the conversion of AMP and phosphate to adenine and ribose 1,5-bisphosphate (R15P). Exhibits phosphorylase activity toward CMP and UMP in addition to AMP. Functions in an archaeal AMP degradation pathway, together with R15P isomerase and RubisCO. This chain is AMP phosphorylase, found in Methanococcoides burtonii (strain DSM 6242 / NBRC 107633 / OCM 468 / ACE-M).